A 281-amino-acid polypeptide reads, in one-letter code: MIEMYDRNYIYNMTTKIMNRSVQAHPFHLVEASPWPIAVSFSLLVVTLSGVMTFQGYSNGLFLLTLGFISLVSTMTLWFKDISREGTFQGHHTFAVQKGLSLGFVLFVVSEVFFFISIFWAFFHSALAPTVELGAHWPPAGIETLNPWEVPLLNTVILLSSGATVTYAHHANPSNRAGVIYGLIATIVLATVFTGFQGFEYYNAPFTFSDGVYGSTFYMATGFHGIHVLVGTIFLTVGLFRVLSYHLTDHHHLGFEQAILYWHFVDVVWLFLFISVYWWGG.

The next 7 helical transmembrane spans lie at 34-54, 59-79, 103-123, 148-168, 179-199, 220-240, and 259-279; these read PWPI…VMTF, NGLF…TLWF, GFVL…WAFF, WEVP…VTYA, VIYG…FQGF, ATGF…VGLF, and ILYW…VYWW.

Belongs to the cytochrome c oxidase subunit 3 family. Component of the cytochrome c oxidase (complex IV, CIV), a multisubunit enzyme composed of a catalytic core of 3 subunits and several supernumerary subunits. The complex exists as a monomer or a dimer and forms supercomplexes (SCs) in the inner mitochondrial membrane with ubiquinol-cytochrome c oxidoreductase (cytochrome b-c1 complex, complex III, CIII).

It is found in the mitochondrion inner membrane. The catalysed reaction is 4 Fe(II)-[cytochrome c] + O2 + 8 H(+)(in) = 4 Fe(III)-[cytochrome c] + 2 H2O + 4 H(+)(out). Its function is as follows. Component of the cytochrome c oxidase, the last enzyme in the mitochondrial electron transport chain which drives oxidative phosphorylation. The respiratory chain contains 3 multisubunit complexes succinate dehydrogenase (complex II, CII), ubiquinol-cytochrome c oxidoreductase (cytochrome b-c1 complex, complex III, CIII) and cytochrome c oxidase (complex IV, CIV), that cooperate to transfer electrons derived from NADH and succinate to molecular oxygen, creating an electrochemical gradient over the inner membrane that drives transmembrane transport and the ATP synthase. Cytochrome c oxidase is the component of the respiratory chain that catalyzes the reduction of oxygen to water. Electrons originating from reduced cytochrome c in the intermembrane space (IMS) are transferred via the dinuclear copper A center (CU(A)) of subunit 2 and heme A of subunit 1 to the active site in subunit 1, a binuclear center (BNC) formed by heme A3 and copper B (CU(B)). The BNC reduces molecular oxygen to 2 water molecules using 4 electrons from cytochrome c in the IMS and 4 protons from the mitochondrial matrix. This is Cytochrome c oxidase subunit 3 (COX3) from Rhizopus stolonifer (Rhizopus nigricans).